We begin with the raw amino-acid sequence, 187 residues long: Probable nicotinate-nucleotide adenylyltransferase (187 aa).

The protein belongs to the NadD family.

It catalyses the reaction nicotinate beta-D-ribonucleotide + ATP + H(+) = deamido-NAD(+) + diphosphate. It participates in cofactor biosynthesis; NAD(+) biosynthesis; deamido-NAD(+) from nicotinate D-ribonucleotide: step 1/1. Its function is as follows. Catalyzes the reversible adenylation of nicotinate mononucleotide (NaMN) to nicotinic acid adenine dinucleotide (NaAD). In Agrobacterium fabrum (strain C58 / ATCC 33970) (Agrobacterium tumefaciens (strain C58)), this protein is Probable nicotinate-nucleotide adenylyltransferase.